The chain runs to 151 residues: Ribosome maturation factor RimP (151 aa).

It belongs to the RimP family.

It is found in the cytoplasm. Its function is as follows. Required for maturation of 30S ribosomal subunits. In Haemophilus influenzae (strain PittEE), this protein is Ribosome maturation factor RimP.